Reading from the N-terminus, the 228-residue chain is MDYESKYFKWLGYEETVRLQKEISEKIIKEDAFKNLRYVGGVDTSSIEDKIAGVIVVLEFNTLEVLEVSIEISQVNFPYIPGFLSFREGPIILKAWENLKIKPDLLIFDGQGIAHPRRLGIASHVGYVLDVPSIGCAKKILVGVYKEPDKKRGSFEYIYIDNEIVGAVVRTKDNVKPVFVSLGHKISLSTSIEIILKTSTKYRLPEPVRLAHIYSKKALNFEIKGELL.

Mg(2+)-binding residues include D43 and D109.

This sequence belongs to the endonuclease V family. The cofactor is Mg(2+).

The protein resides in the cytoplasm. The catalysed reaction is Endonucleolytic cleavage at apurinic or apyrimidinic sites to products with a 5'-phosphate.. Functionally, DNA repair enzyme involved in the repair of deaminated bases. Selectively cleaves double-stranded DNA at the second phosphodiester bond 3' to a deoxyinosine leaving behind the intact lesion on the nicked DNA. The sequence is that of Endonuclease V from Dictyoglomus thermophilum (strain ATCC 35947 / DSM 3960 / H-6-12).